We begin with the raw amino-acid sequence, 1207 residues long: Plasma membrane calcium-transporting ATPase 4 (1207 aa).

Residues 1 to 100 are Cytoplasmic-facing; that stretch reads MTNPTEHTLP…KTFLELVWEA (100 aa). S13 is subject to Phosphoserine. The helical transmembrane segment at 101-121 threads the bilayer; the sequence is LQDVTLIILEIAAIISLVLSF. At 122–147 the chain is on the extracellular side; it reads YRPPGGENEQCGLAVTSPEDEGEAEA. A helical transmembrane segment spans residues 148–168; the sequence is GWIEGAAILFSVIIVVLVTAF. The Cytoplasmic segment spans residues 169-368; that stretch reads NDWSKEKQFR…LAVQIGKAGL (200 aa). The tract at residues 294-317 is disordered; the sequence is EEEKKKKGKKQGVPENRNKAKTQD. S328 and S334 each carry phosphoserine. Residues 369–389 form a helical membrane-spanning segment; it reads IMSAITVLILILYFVIDNFVI. Over 390 to 408 the chain is Extracellular; sequence QRRPWLAECTPIYVQYFVK. Residues 409 to 429 traverse the membrane as a helical segment; the sequence is FFIIGVTVLVVAVPEGLPLAV. Over 430–843 the chain is Cytoplasmic; that stretch reads TISLAYSVKK…RNVYDSISKF (414 aa). D465 functions as the 4-aspartylphosphate intermediate in the catalytic mechanism. Residues D785 and D789 each contribute to the Mg(2+) site. Residues 844–864 traverse the membrane as a helical segment; that stretch reads LQFQLTVNVVAVIVAFTGACI. Over 865–871 the chain is Extracellular; that stretch reads TQDSPLK. A helical membrane pass occupies residues 872–892; sequence AVQMLWVNLIMDTFASLALAT. Over 893–918 the chain is Cytoplasmic; sequence EPPTDSLLKRRPYGRNKPLISRTMMK. A helical transmembrane segment spans residues 919–939; the sequence is NILGHAVYQLTVIFFLVFAGE. Residues 940–957 lie on the Extracellular side of the membrane; it reads KFFDIDSGRRAPLHSPPS. A helical transmembrane segment spans residues 958–977; sequence QHYTIIFNTFVLMQLFNEIN. Residues 978 to 994 are Cytoplasmic-facing; sequence SRKIHGERNVFSGIFRN. Residues 995–1015 form a helical membrane-spanning segment; that stretch reads LIFCSVVLGTFISQIIIVEFG. Over 1016–1028 the chain is Extracellular; that stretch reads GKPFSCTKLTLSQ. A helical transmembrane segment spans residues 1029-1049; that stretch reads WFWCLFIGIGELLWGQVISTI. The Cytoplasmic segment spans residues 1050–1207; sequence PTQSLKFLKE…SPLHSLETSV (158 aa). A calmodulin-binding subdomain A region spans residues 1086–1103; that stretch reads LRRGQILWFRGLNRIQTQ. Phosphothreonine; by PKC is present on T1102. The interval 1104-1113 is calmodulin-binding subdomain B; that stretch reads IKVVKAFHSS. The disordered stretch occupies residues 1159 to 1181; the sequence is VSKPGTKTSSLDGEVTPQTNKNN. Over residues 1163–1181 the composition is skewed to polar residues; it reads GTKTSSLDGEVTPQTNKNN.

The protein belongs to the cation transport ATPase (P-type) (TC 3.A.3) family. Type IIB subfamily. Interacts with PDZD11. Interacts with SLC35G1 and STIM1. Interacts with calmodulin. In terms of tissue distribution, isoform 1 is detected in brain, heart, liver, testis and epididymis. Isoform 2 is detected in brain (at protein level), heart, seminal vesicle and epididymis. There is a shift in expression from isoform 1 to isoform 2 along the length of the epididymis from caput to cauda (at protein level).

The protein resides in the cell membrane. It is found in the cell projection. It localises to the cilium. The protein localises to the flagellum membrane. It carries out the reaction Ca(2+)(in) + ATP + H2O = Ca(2+)(out) + ADP + phosphate + H(+). Activated by calcium/calmodulin. Functionally, calcium/calmodulin-regulated and magnesium-dependent enzyme that catalyzes the hydrolysis of ATP coupled with the transport of calcium out of the cell. By regulating sperm cells calcium homeostasis, may play a role in sperm motility. This Bos taurus (Bovine) protein is Plasma membrane calcium-transporting ATPase 4.